The sequence spans 433 residues: Adenylosuccinate synthetase (433 aa).

Residues 18 to 24 (GDEGKGK) and 46 to 48 (GHT) contribute to the GTP site. Aspartate 19 serves as the catalytic Proton acceptor. Positions 19 and 46 each coordinate Mg(2+). IMP contacts are provided by residues 19-22 (DEGK), 44-47 (NAGH), threonine 136, arginine 150, glutamine 229, threonine 244, and arginine 308. Catalysis depends on histidine 47, which acts as the Proton donor. Residue 304 to 310 (VTTKRMR) participates in substrate binding. Residues arginine 310, 336–338 (KID), and 420–422 (GTG) contribute to the GTP site.

The protein belongs to the adenylosuccinate synthetase family. As to quaternary structure, homodimer. Requires Mg(2+) as cofactor.

It is found in the cytoplasm. The catalysed reaction is IMP + L-aspartate + GTP = N(6)-(1,2-dicarboxyethyl)-AMP + GDP + phosphate + 2 H(+). It participates in purine metabolism; AMP biosynthesis via de novo pathway; AMP from IMP: step 1/2. Functionally, plays an important role in the de novo pathway and in the salvage pathway of purine nucleotide biosynthesis. Catalyzes the first committed step in the biosynthesis of AMP from IMP. The polypeptide is Adenylosuccinate synthetase (Schistosoma japonicum (Blood fluke)).